A 569-amino-acid polypeptide reads, in one-letter code: Putative ABC transporter ATP-binding protein TTE1589 (569 aa).

ABC transporter domains lie at 8-248 (IIVK…IGLM) and 309-542 (IQAK…LSLK). ATP is bound by residues 43-50 (GPSGAGKS) and 342-349 (GHNGSGKT).

Belongs to the ABC transporter superfamily.

Its subcellular location is the cell membrane. Its function is as follows. Probably part of an ABC transporter complex. Responsible for energy coupling to the transport system. The polypeptide is Putative ABC transporter ATP-binding protein TTE1589 (Caldanaerobacter subterraneus subsp. tengcongensis (strain DSM 15242 / JCM 11007 / NBRC 100824 / MB4) (Thermoanaerobacter tengcongensis)).